A 308-amino-acid chain; its full sequence is Cyclin-D4-1 (308 aa).

Belongs to the cyclin family. Cyclin D subfamily. As to quaternary structure, interacts with CDKA-1, CDKB2-1, KRP4/ICK7, KRP5/ICK3, KRP6/ICK4 and KRP7/ICK5. As to expression, expressed in shoot apical meristem, leaf primordia vascular tissues and tapetum of anthers.

May activate cell cycle in the root apical meristem (RAM) and promote embryonic root (radicle) protrusion. This chain is Cyclin-D4-1 (CYCD4-1), found in Arabidopsis thaliana (Mouse-ear cress).